We begin with the raw amino-acid sequence, 901 residues long: Glutamate receptor 2.1 (901 aa).

Residues 1–25 (MKRENNLVLSLLFFVIVFLMQVGEA) form the signal peptide. The Extracellular portion of the chain corresponds to 26-574 (QNRITNVNVG…SSTIFLMPLT (549 aa)). Residues N46, N53, N204, N267, N331, N342, N461, N477, and N536 are each glycosylated (N-linked (GlcNAc...) asparagine). A helical transmembrane segment spans residues 575–595 (LALWLISLLSFFIIGLVVWVL). Residues 596 to 604 (EHRVNPDFD) lie on the Cytoplasmic side of the membrane. The helical transmembrane segment at 605-625 (GPGQYQLSTIFWFSFSIMVFA) threads the bilayer. Residues 626 to 629 (PRER) lie on the Cytoplasmic side of the membrane. The helical transmembrane segment at 630-650 (VLSFWARVVVIIWYFLVLVLT) threads the bilayer. Topologically, residues 651–823 (QSYTASLASL…VSFRQLGFDS (173 aa)) are extracellular. A helical membrane pass occupies residues 824–844 (FWVLFLVAAIVCTMALLKFVY). Over 845 to 901 (QFLKENPNQRNLRVLWEKFNEPDQKSYIKDVTKCQCSSGQGMPKNGQEGANAVNNGN) the chain is Cytoplasmic.

It belongs to the glutamate-gated ion channel (TC 1.A.10.1) family. As to quaternary structure, may form heteromers. Expressed predominantly in roots. First strongly detected in all cell types of the root except at the apex. Later expressed at the root-shoot junction.

The protein resides in the membrane. In terms of biological role, glutamate-gated receptor that probably acts as a non-selective cation channel. May be involved in light-signal transduction and calcium homeostasis via the regulation of calcium influx into cells. This is Glutamate receptor 2.1 (GLR2.1) from Arabidopsis thaliana (Mouse-ear cress).